The following is a 119-amino-acid chain: Large ribosomal subunit protein bL20 (119 aa).

Belongs to the bacterial ribosomal protein bL20 family.

Functionally, binds directly to 23S ribosomal RNA and is necessary for the in vitro assembly process of the 50S ribosomal subunit. It is not involved in the protein synthesizing functions of that subunit. This Brevibacillus brevis (strain 47 / JCM 6285 / NBRC 100599) protein is Large ribosomal subunit protein bL20.